The following is a 264-amino-acid chain: MVKPLPRLRLQGFNNLTKALSFNIYDVCYARTEEERQRYIDYIDERYDADRLTQILTDVAEIIGANILNIARQDYDPQGASVTILISEEPVIDKKQAGKELISDAVVAHMDKSHITVHTYPETHPQEGIATFRADIDVATCGVISPLKALNYLIESLESDIVIMDYRVRGFTRDVKGKKHFIDHKINSIQNFLSKSIKSRYEMFDVNVYQENIFHTKMHLKDFDLDQYLFEEKARNLSFKERMKIEALLKLEIEELFHGRNLAE.

The active-site Schiff-base intermediate with substrate; via pyruvic acid is S113. The residue at position 113 (S113) is a Pyruvic acid (Ser); by autocatalysis. The active-site Proton acceptor; for processing activity is the H118. The active-site Proton donor; for catalytic activity is the C141.

This sequence belongs to the prokaryotic AdoMetDC family. Type 2 subfamily. As to quaternary structure, heterooctamer of four alpha and four beta chains arranged as a tetramer of alpha/beta heterodimers. It depends on pyruvate as a cofactor. Post-translationally, is synthesized initially as an inactive proenzyme. Formation of the active enzyme involves a self-maturation process in which the active site pyruvoyl group is generated from an internal serine residue via an autocatalytic post-translational modification. Two non-identical subunits are generated from the proenzyme in this reaction, and the pyruvate is formed at the N-terminus of the alpha chain, which is derived from the carboxyl end of the proenzyme. The post-translation cleavage follows an unusual pathway, termed non-hydrolytic serinolysis, in which the side chain hydroxyl group of the serine supplies its oxygen atom to form the C-terminus of the beta chain, while the remainder of the serine residue undergoes an oxidative deamination to produce ammonia and the pyruvoyl group blocking the N-terminus of the alpha chain.

It catalyses the reaction S-adenosyl-L-methionine + H(+) = S-adenosyl 3-(methylsulfanyl)propylamine + CO2. The protein operates within amine and polyamine biosynthesis; S-adenosylmethioninamine biosynthesis; S-adenosylmethioninamine from S-adenosyl-L-methionine: step 1/1. Functionally, catalyzes the decarboxylation of S-adenosylmethionine to S-adenosylmethioninamine (dcAdoMet), the propylamine donor required for the synthesis of the polyamines spermine and spermidine from the diamine putrescine. This chain is S-adenosylmethionine decarboxylase proenzyme, found in Xylella fastidiosa (strain 9a5c).